Here is a 273-residue protein sequence, read N- to C-terminus: Phosphate import ATP-binding protein PstB (273 aa).

One can recognise an ABC transporter domain in the interval 27-268; sequence VTVRNLNFYY…PSDRRTQDYI (242 aa). Residue 59 to 66 coordinates ATP; that stretch reads GPSGCGKS.

The protein belongs to the ABC transporter superfamily. Phosphate importer (TC 3.A.1.7) family. In terms of assembly, the complex is composed of two ATP-binding proteins (PstB), two transmembrane proteins (PstC and PstA) and a solute-binding protein (PstS).

Its subcellular location is the cell inner membrane. The catalysed reaction is phosphate(out) + ATP + H2O = ADP + 2 phosphate(in) + H(+). Its function is as follows. Part of the ABC transporter complex PstSACB involved in phosphate import. Responsible for energy coupling to the transport system. The sequence is that of Phosphate import ATP-binding protein PstB from Bradyrhizobium diazoefficiens (strain JCM 10833 / BCRC 13528 / IAM 13628 / NBRC 14792 / USDA 110).